Reading from the N-terminus, the 119-residue chain is Large ribosomal subunit protein uL18 (119 aa).

This sequence belongs to the universal ribosomal protein uL18 family. As to quaternary structure, part of the 50S ribosomal subunit; part of the 5S rRNA/L5/L18/L25 subcomplex. Contacts the 5S and 23S rRNAs.

This is one of the proteins that bind and probably mediate the attachment of the 5S RNA into the large ribosomal subunit, where it forms part of the central protuberance. This is Large ribosomal subunit protein uL18 from Oceanobacillus iheyensis (strain DSM 14371 / CIP 107618 / JCM 11309 / KCTC 3954 / HTE831).